The primary structure comprises 103 residues: N(4)-acetylcytidine amidohydrolase (103 aa).

The 95-residue stretch at 6–100 (ITFFQRFQED…AEDRFYVIEF (95 aa)) folds into the ASCH domain. K21 (proton acceptor) is an active-site residue. T24 functions as the Nucleophile in the catalytic mechanism. Residue E74 is the Proton donor of the active site.

It belongs to the N(4)-acetylcytidine amidohydrolase family.

It carries out the reaction N(4)-acetylcytidine + H2O = cytidine + acetate + H(+). The catalysed reaction is N(4)-acetyl-2'-deoxycytidine + H2O = 2'-deoxycytidine + acetate + H(+). It catalyses the reaction N(4)-acetylcytosine + H2O = cytosine + acetate + H(+). Functionally, catalyzes the hydrolysis of N(4)-acetylcytidine (ac4C). The polypeptide is N(4)-acetylcytidine amidohydrolase (Klebsiella pneumoniae (strain 342)).